A 239-amino-acid chain; its full sequence is Cysteine-rich venom protein 2 (239 aa).

The N-terminal stretch at 1–19 is a signal peptide; the sequence is MIALIVLPILAAVLQQSSG. Residues 38–166 enclose the SCP domain; that stretch reads VDLHNSLRRS…EYSYFYVCQY (129 aa). 7 disulfide bridges follow: cysteine 75–cysteine 153, cysteine 92–cysteine 167, cysteine 148–cysteine 164, cysteine 186–cysteine 193, cysteine 189–cysteine 198, cysteine 202–cysteine 234, and cysteine 219–cysteine 232. A ShKT domain is found at 198–234; that stretch reads CTNPCPKKISTQLPRFGPQAGCQDKQMQSDCSATCFC.

Belongs to the CRISP family. Expressed by the venom gland.

The protein resides in the secreted. Functionally, weakly blocks contraction of smooth muscle elicited by high potassium-induced depolarization, but does not block caffeine-stimulated contraction. May target voltage-gated calcium channels on smooth muscle. The polypeptide is Cysteine-rich venom protein 2 (Sistrurus catenatus edwardsii (Desert massasauga)).